Reading from the N-terminus, the 228-residue chain is tRNA (guanine-N(1)-)-methyltransferase (228 aa).

Residues Gly-111 and 131–136 each bind S-adenosyl-L-methionine; that span reads IGDFIL.

This sequence belongs to the RNA methyltransferase TrmD family. As to quaternary structure, homodimer.

The protein resides in the cytoplasm. It catalyses the reaction guanosine(37) in tRNA + S-adenosyl-L-methionine = N(1)-methylguanosine(37) in tRNA + S-adenosyl-L-homocysteine + H(+). Functionally, specifically methylates guanosine-37 in various tRNAs. The chain is tRNA (guanine-N(1)-)-methyltransferase from Pelagibacter ubique (strain HTCC1062).